We begin with the raw amino-acid sequence, 496 residues long: Fibronectin type III and SPRY domain-containing protein 1 (496 aa).

Residues 4–99 (QREALRKIIT…ALESSEELLE (96 aa)) are a coiled coil. The COS domain occupies 105–162 (LQASDSEDFSQAAKEIKDGITMAPAFRLSLKAKVSDNMSHLMVDFAQERQMLQALKFL). Positions 164–268 (VPSAPTIDLA…EPVTLETPAF (105 aa)) constitute a Fibronectin type-III domain. In terms of domain architecture, B30.2/SPRY spans 290-477 (WDAMGGKVQD…VTTGLQVPSA (188 aa)). The disordered stretch occupies residues 301 to 336 (KAREKEGKGRTASPVNSPARGTPSPKRMSSGRGGRD). Residues R310 and R320 each carry the omega-N-methylarginine modification.

As to quaternary structure, oligomerization is required for binding to microtubules.

It is found in the cytoplasm. The protein resides in the cytoskeleton. It localises to the microtubule organizing center. Its subcellular location is the centrosome. The protein localises to the nucleus. It is found in the cleavage furrow. May be involved in microtubule organization and stabilization. In Mus musculus (Mouse), this protein is Fibronectin type III and SPRY domain-containing protein 1 (Fsd1).